Here is a 133-residue protein sequence, read N- to C-terminus: Small ribosomal subunit protein uS11 (133 aa).

This sequence belongs to the universal ribosomal protein uS11 family. As to quaternary structure, part of the 30S ribosomal subunit.

Functionally, located on the platform of the 30S subunit. The sequence is that of Small ribosomal subunit protein uS11 from Pyrobaculum aerophilum (strain ATCC 51768 / DSM 7523 / JCM 9630 / CIP 104966 / NBRC 100827 / IM2).